A 547-amino-acid polypeptide reads, in one-letter code: Fiber protein 1 (547 aa).

It belongs to the adenoviridae fiber family. Homotrimer. Interacts with host receptor CXCAR. Interacts (via N-terminal tail region) with pentons.

Its subcellular location is the virion. The protein resides in the host nucleus. Functionally, forms spikes that protrude from each vertex of the icosahedral capsid. Interacts with host receptor CXCAR to provide virion initial attachment to target cell. Fiber proteins are shed during virus entry, when virus is still at the cell surface. The sequence is that of Fiber protein 1 from Human adenovirus F serotype 40 (HAdV-40).